We begin with the raw amino-acid sequence, 706 residues long: Histone deacetylase HDA1 (706 aa).

The segment covering 1–24 has biased composition (basic and acidic residues); that stretch reads MDSVMVKKEVLENPDHDLKRKLEE. A disordered region spans residues 1-36; sequence MDSVMVKKEVLENPDHDLKRKLEENKEEENSLSTTS. The histone deacetylase stretch occupies residues 67 to 396; it reads RYHAKIFTSY…ALSVAKVLIG (330 aa). The active site involves His206.

The protein belongs to the histone deacetylase family. HD type 2 subfamily.

Its subcellular location is the nucleus. The enzyme catalyses N(6)-acetyl-L-lysyl-[histone] + H2O = L-lysyl-[histone] + acetate. In terms of biological role, responsible for the deacetylation of lysine residues on the N-terminal part of the core histones (H2A, H2B, H3 and H4). Histone deacetylation gives a tag for epigenetic repression and plays an important role in transcriptional regulation, cell cycle progression and developmental events. Histone deacetylases act via the formation of large multiprotein complexes. In Saccharomyces cerevisiae (strain ATCC 204508 / S288c) (Baker's yeast), this protein is Histone deacetylase HDA1 (HDA1).